The sequence spans 3674 residues: Dystrophin (3674 aa).

The interval 1–236 (MSEVSSDERE…YVTSLFQVLP (236 aa)) is actin-binding. Calponin-homology (CH) domains follow at residues 11–115 (DVQK…LHWQ) and 130–236 (TNSE…QVLP). Positions 59–68 (PKEKGSTRVH) are ANK2- and ANK-3 binding. Over residues 306–318 (SDPTRSPFPSQRL) the composition is skewed to polar residues. The tract at residues 306–325 (SDPTRSPFPSQRLESPEDKS) is disordered. Spectrin repeat units follow at residues 335–443 (VNLD…NLHK), 444–552 (VLMD…LLQD), 555–663 (LKWQ…QISQ), 715–824 (EIRK…WLEY), 826–930 (NRII…ELQI), 939–1041 (RYQE…KLEE), 1044–1150 (AKLR…ALKG), 1153–1259 (DKTI…TLEE), 1262–1363 (ACWH…LLEQ), 1364–1459 (SIQS…LFQK), 1464–1564 (EQRL…QLEK), 1567–1672 (KLSR…LLLE), 1675–1774 (KHME…KASI), 1775–1870 (PLKE…KALE), 1873–1975 (HQWY…TVHE), 1988–2097 (EISY…KFDR), 2100–2204 (EKWR…RLEE), 2207–2314 (NILS…EIEA), 2315–2412 (HIKD…LRAK), 2464–2566 (FNRA…QLNE), 2569–2675 (KDST…VLEE), 2678–2791 (RLLQ…HLEA), 2797–2919 (KRLH…RKID), and 2924–3029 (RLQE…QLHE). An interaction with SYNM region spans residues 1411 to 1909 (SDLTSHEISL…PEPQDEKKIK (499 aa)). Positions 3044 to 3077 (TSVQGPWERAISPNKVPYYINHETQTTCWDHPKM) constitute a WW domain. Residues 3047-3397 (QGPWERAISP…TVLEGDNMET (351 aa)) form an interaction with SYNM region. The ZZ-type; degenerate zinc-finger motif lies at 3297–3353 (KHQAKCNICKECPIIGFRYRSLKHFNYDICQSCFFSGRVAKGHKMHYPMVEYCTPTT). The Zn(2+) site is built by Cys-3302, Cys-3305, Cys-3326, and Cys-3329. The interval 3455 to 3507 (DDEHLLIQHYCQSLNQDSPLSQPRSPAQILISLESEERGELERILADLEEENR) is binds to SNTB1. Ser-3472, Ser-3479, and Ser-3489 each carry phosphoserine. 2 disordered regions span residues 3517–3543 (KQQHEHKGLSPLPSPPEMMPTSPQSPR) and 3590–3674 (QAEA…EDTM). Polar residues-rich tracts occupy residues 3596–3615 (NGTTVSSPSTSLQRSDSSQP) and 3651–3662 (QLNNSFPSSRGR). Phosphoserine is present on residues Ser-3601, Ser-3602, Ser-3606, Ser-3612, Ser-3613, and Ser-3655.

In terms of assembly, interacts with SYNM. Interacts with the syntrophins SNTG1 and SNTG2. Interacts with KRT19. Component of the dystrophin-associated glycoprotein complex which is composed of three subcomplexes: a cytoplasmic complex comprised of DMD (or UTRN), DTNA and a number of syntrophins, such as SNTB1, SNTB2, SNTG1 and SNTG2, the transmembrane dystroglycan complex, and the sarcoglycan-sarcospan complex. Interacts with DAG1 (betaDAG1) with DMD; the interaction is inhibited by phosphorylation on the PPXY motif of DAG1. Interacts with SYNM; SNTA1 and SNTB1. Interacts with CMYA5. Directly interacts with ANK2 and ANK3; these interactions do not interfere with betaDAG1-binding and are necessary for proper localization in muscle cells. Identified in a dystroglycan complex that contains at least PRX, DRP2, UTRN, DMD and DAG1. Interacts with DTNB. Interacts with PGM5; the interaction is direct. Interacts with NOS1; localizes NOS1 to sarcolemma in muscle cells. As to expression, in the retina, expressed in the outer plexiform layer (OPL) and around the blood vessels. Also observed at the vitreal border of the retina corresponding to the inner limiting membrane (ILM). Presynaptically localized in cone pedicles and postsynaptically in bipolar cells (at protein level).

It is found in the cell membrane. It localises to the sarcolemma. The protein resides in the cytoplasm. Its subcellular location is the cytoskeleton. The protein localises to the postsynaptic cell membrane. Its function is as follows. Anchors the extracellular matrix to the cytoskeleton via F-actin. Ligand for dystroglycan. Component of the dystrophin-associated glycoprotein complex which accumulates at the neuromuscular junction (NMJ) and at a variety of synapses in the peripheral and central nervous systems and has a structural function in stabilizing the sarcolemma. Also implicated in signaling events and synaptic transmission. The chain is Dystrophin from Sus scrofa (Pig).